A 340-amino-acid polypeptide reads, in one-letter code: Adenosine deaminase-like protein (340 aa).

The Zn(2+) site is built by His-14 and His-16. Residues His-16, Asn-18, His-68, 100–103, and Gly-173 contribute to the N(6)-methyl-AMP site; that span reads TTPK. Position 200 (His-200) interacts with Zn(2+). Residues Glu-203, Asp-278, and Asp-279 each coordinate N(6)-methyl-AMP. Catalysis depends on Glu-203, which acts as the Proton donor. Asp-278 is a Zn(2+) binding site.

It belongs to the metallo-dependent hydrolases superfamily. Adenosine and AMP deaminases family. In terms of assembly, monomer. It depends on Zn(2+) as a cofactor.

It carries out the reaction N(6)-methyl-AMP + H2O + H(+) = IMP + methylamine. Functionally, catalyzes the hydrolysis of the free cytosolic methylated adenosine nucleotide N(6)-methyl-AMP (N6-mAMP) to produce inositol monophosphate (IMP) and methylamine. Is required for the catabolism of cytosolic N6-mAMP, which is derived from the degradation of mRNA containing N6-methylated adenine (m6A). The sequence is that of Adenosine deaminase-like protein from Drosophila pseudoobscura pseudoobscura (Fruit fly).